The primary structure comprises 224 residues: Ribose-5-phosphate isomerase A 2 (224 aa).

Substrate contacts are provided by residues S27–T30, D83–D86, and K96–G99. Residue E105 is the Proton acceptor of the active site. K123 is a binding site for substrate.

Belongs to the ribose 5-phosphate isomerase family. Homodimer.

It carries out the reaction aldehydo-D-ribose 5-phosphate = D-ribulose 5-phosphate. Its pathway is carbohydrate degradation; pentose phosphate pathway; D-ribose 5-phosphate from D-ribulose 5-phosphate (non-oxidative stage): step 1/1. Catalyzes the reversible conversion of ribose-5-phosphate to ribulose 5-phosphate. The protein is Ribose-5-phosphate isomerase A 2 of Oceanobacillus iheyensis (strain DSM 14371 / CIP 107618 / JCM 11309 / KCTC 3954 / HTE831).